Reading from the N-terminus, the 468-residue chain is Soluble pyridine nucleotide transhydrogenase (468 aa).

An FAD-binding site is contributed by 36–45 (ERYKNVGGGC).

Belongs to the class-I pyridine nucleotide-disulfide oxidoreductase family. FAD serves as cofactor.

It is found in the cytoplasm. The catalysed reaction is NAD(+) + NADPH = NADH + NADP(+). In terms of biological role, conversion of NADPH, generated by peripheral catabolic pathways, to NADH, which can enter the respiratory chain for energy generation. The protein is Soluble pyridine nucleotide transhydrogenase of Hamiltonella defensa subsp. Acyrthosiphon pisum (strain 5AT).